Reading from the N-terminus, the 341-residue chain is Arfaptin-2 (341 aa).

Residues 46-85 form a disordered region; the sequence is NETSIVSGGYGGSGDGLIPTGSGRHPSHSTTPSGPGDEVA. Ser-72 is modified (phosphoserine). Thr-76 carries the post-translational modification Phosphothreonine. One can recognise an AH domain in the interval 121–321; it reads TVDLELELQI…NQKQLEQTLQ (201 aa).

As to quaternary structure, forms homodimers or heterodimers with ARFIP1. Interacts with RAC1. Specifically binds to GTP-bound ARF1 and ARF6, but binds to RAC1.GTP and RAC1.GDP with similar affinities. Interacts with ARL1. Interacts (via N-terminus) with IKBKB and IKBKG; these interactions inhibit activation of NF-kappa-B.

Its subcellular location is the golgi apparatus. It is found in the trans-Golgi network membrane. Functionally, plays a role in constitutive metalloproteinase (MMP) secretion from the trans Golgi network. May have important functions during vesicle biogenesis at certain cargo subdomains, which could be predominantly utilized by secreted MMPs, such as MMP7 and MMP2. Also involved in autophagy by regulating the starvation-dependent trafficking of ATG9A vesicles which deliver the phosphatidylinositol 4-kinase beta (PI4KB) to the autophagosome initiation site. Involved in phagophore growth during mitophagy by regulating ATG9A trafficking to mitochondria. In addition, plays a role in NF-kappa-B inhibition by interacting with IKBKB and IKBKG. This is Arfaptin-2 from Homo sapiens (Human).